A 131-amino-acid polypeptide reads, in one-letter code: Aspartate 1-decarboxylase (131 aa).

Ser25 (schiff-base intermediate with substrate; via pyruvic acid) is an active-site residue. Pyruvic acid (Ser) is present on Ser25. Residue Thr57 participates in substrate binding. Tyr58 functions as the Proton donor in the catalytic mechanism. Substrate is bound at residue 73–75 (GAA). A disordered region spans residues 112 to 131 (NVPTTQKSENPGQGSLRNAI). Over residues 113 to 131 (VPTTQKSENPGQGSLRNAI) the composition is skewed to polar residues.

It belongs to the PanD family. As to quaternary structure, heterooctamer of four alpha and four beta subunits. Pyruvate is required as a cofactor. Post-translationally, is synthesized initially as an inactive proenzyme, which is activated by self-cleavage at a specific serine bond to produce a beta-subunit with a hydroxyl group at its C-terminus and an alpha-subunit with a pyruvoyl group at its N-terminus.

The protein resides in the cytoplasm. It catalyses the reaction L-aspartate + H(+) = beta-alanine + CO2. It participates in cofactor biosynthesis; (R)-pantothenate biosynthesis; beta-alanine from L-aspartate: step 1/1. Its function is as follows. Catalyzes the pyruvoyl-dependent decarboxylation of aspartate to produce beta-alanine. This chain is Aspartate 1-decarboxylase, found in Syntrophotalea carbinolica (strain DSM 2380 / NBRC 103641 / GraBd1) (Pelobacter carbinolicus).